A 778-amino-acid polypeptide reads, in one-letter code: Serine/threonine-protein kinase BRSK1 (778 aa).

Gly residues predominate over residues 1–12; it reads MSSGSKEGGGGS. The tract at residues 1-29 is disordered; the sequence is MSSGSKEGGGGSPAYHLPHPHPHPPQHAQ. In terms of domain architecture, Protein kinase spans 34-285; the sequence is YRLEKTLGKG…LEQIQKHPWY (252 aa). ATP-binding positions include 40-48 and lysine 63; that span reads LGKGQTGLV. The active-site Proton acceptor is aspartate 156. Threonine 189 carries the phosphothreonine; by LKB1 modification. Residues 314–356 form the UBA domain; sequence ELDPDVLESMASLGCFRDRERLHRELRSEEENQEKMIYYLLLD. Over residues 362–383 the composition is skewed to basic and acidic residues; that stretch reads PSCEDQDLPPRNDVDPPRKRVD. Residues 362–548 are disordered; sequence PSCEDQDLPP…SPGGGVGGAA (187 aa). Phosphoserine occurs at positions 399, 443, 447, and 450. The span at 430–457 shows a compositional bias: low complexity; sequence SRSVSGASTGLSSSPLSSPRSPVFSFSP. Residues arginine 466, arginine 481, arginine 484, and arginine 498 each carry the omega-N-methylarginine modification. The span at 491–508 shows a compositional bias: pro residues; the sequence is QPPPPSARSTPLPGPPGS. Serine 508 carries the post-translational modification Phosphoserine. Over residues 509-533 the composition is skewed to low complexity; the sequence is PRSSGGTPLHSPLHTPRASPTGTPG. Arginine 525 is subject to Omega-N-methylarginine. Phosphothreonine occurs at positions 529 and 535. At arginine 550 the chain carries Omega-N-methylarginine. Positions 560–588 are disordered; that stretch reads FLGSPRFHRRKMQVPTAEEMSSLTPESSP. Threonine 583 carries the phosphothreonine modification. A phosphoserine mark is found at serine 586, serine 587, and serine 601. Positions 719 to 778 are disordered; the sequence is QPSVQALADEKNGAQTRPAGTPPRSLQPPPGRSDPDLSSSPRRGPPKDKKLLATNGTPLP.

This sequence belongs to the protein kinase superfamily. CAMK Ser/Thr protein kinase family. SNF1 subfamily. It depends on Mg(2+) as a cofactor. Post-translationally, phosphorylated at Thr-189 by STK11/LKB1 in complex with STE20-related adapter-alpha (STRADA) pseudo kinase and CAB39. Not phosphorylated at Thr-189 by CaMKK2. In contrast, it is phosphorylated and activated by CaMKK1. May be inactivated via dephosphorylation of Thr-189 by PP2C. As to expression, present in the gray matter of the brain and spinal cord (at protein level). Expressed in the nervous system, distributed within the brain and spinal cord of embryonic and postnatal animals.

Its subcellular location is the cytoplasm. It localises to the nucleus. The protein localises to the cytoskeleton. The protein resides in the microtubule organizing center. It is found in the centrosome. Its subcellular location is the synapse. It localises to the presynaptic active zone. The protein localises to the cytoplasmic vesicle. The protein resides in the secretory vesicle. It is found in the synaptic vesicle. It catalyses the reaction L-seryl-[protein] + ATP = O-phospho-L-seryl-[protein] + ADP + H(+). It carries out the reaction L-threonyl-[protein] + ATP = O-phospho-L-threonyl-[protein] + ADP + H(+). The enzyme catalyses L-seryl-[tau protein] + ATP = O-phospho-L-seryl-[tau protein] + ADP + H(+). The catalysed reaction is L-threonyl-[tau protein] + ATP = O-phospho-L-threonyl-[tau protein] + ADP + H(+). Its activity is regulated as follows. Activated by phosphorylation on Thr-189 by STK11/LKB1. Its function is as follows. Serine/threonine-protein kinase that plays a key role in polarization of neurons and centrosome duplication. Phosphorylates CDC25B, CDC25C, MAPT/TAU, RIMS1, TUBG1, TUBG2 and WEE1. Following phosphorylation and activation by STK11/LKB1, acts as a key regulator of polarization of cortical neurons, probably by mediating phosphorylation of microtubule-associated proteins such as MAPT/TAU at 'Thr-504' and 'Ser-554'. Also regulates neuron polarization by mediating phosphorylation of WEE1 at 'Ser-642' in postmitotic neurons, leading to down-regulate WEE1 activity in polarized neurons. In neurons, localizes to synaptic vesicles and plays a role in neurotransmitter release, possibly by phosphorylating RIMS1. Also acts as a positive regulator of centrosome duplication by mediating phosphorylation of gamma-tubulin (TUBG1 and TUBG2) at 'Ser-131', leading to translocation of gamma-tubulin and its associated proteins to the centrosome. Involved in the UV-induced DNA damage checkpoint response, probably by inhibiting CDK1 activity through phosphorylation and activation of WEE1, and inhibition of CDC25B and CDC25C. This chain is Serine/threonine-protein kinase BRSK1 (Brsk1), found in Mus musculus (Mouse).